A 459-amino-acid polypeptide reads, in one-letter code: Lipase 4 (459 aa).

An N-terminal signal peptide occupies residues 1–14; sequence MLFLLFLLVAPIYA. A disulfide bond links C110 and C281. Catalysis depends on S194, which acts as the Charge relay system. N-linked (GlcNAc...) asparagine glycosylation is found at N229 and N266. Catalysis depends on charge relay system residues D343 and H376. A disulfide bond links C359 and C404.

It belongs to the AB hydrolase superfamily. Lipase family. Class Lip subfamily.

The protein resides in the secreted. It catalyses the reaction a triacylglycerol + H2O = a diacylglycerol + a fatty acid + H(+). Its function is as follows. Secreted lipase that is able to hydrolyze both the neutral triacylglycerols and the monopalmitate ester Tween 40, allowing the use of hydrolyzed products as carbon sources. Has broad lipolytic activity, which may be important for colonization and subsequent infection, therefore contributing to the persistence and virulence in human tissue. The polypeptide is Lipase 4 (Candida albicans (strain SC5314 / ATCC MYA-2876) (Yeast)).